A 441-amino-acid polypeptide reads, in one-letter code: Transcription factor TOXE (441 aa).

Positions 14–40 are basic DNA-binding region; that stretch reads TDINERRKLQNRVAQRKYRTRQKTRMK. The interval 209 to 243 is disordered; it reads FEPNDQRKTENLPREPCGSCPSSSHGYSPTSGNPS. Positions 212–221 are enriched in basic and acidic residues; it reads NDQRKTENLP. Residues 228–241 show a composition bias toward polar residues; sequence CPSSSHGYSPTSGN. ANK repeat units lie at residues 289–318, 322–351, 355–384, and 413–440; these read DQFS…PLDI, SGKT…EMLA, EGNS…SCRE, and EGMT…SANV.

It belongs to the bZIP family. Monomer.

The protein resides in the nucleus. Its function is as follows. Transcription factor, part of the diffuse TOX2 gene cluster that mediates the biosynthesis of the HC-toxin, cyclic tetrapeptide of structure cyclo(D-Pro-L-Ala-D-Ala-L-Aeo), where Aeo stands for 2-amino-9,10-epoxi-8-oxodecanoic acid. HC-toxin is a determinant of specificity and virulence in the interaction between the producing fungus and its host, maize. TOXE is a pathway-specific transcription factor which coordinates the expression of genes involved in HC-toxin biosynthesis. Binds to the tox-box, a 10-bp motif with the consensus 5'-ATCTCNCGNA-3', which is found in the promoter of all genes involved in HC-toxin biosynthesis. Required for pathogenicity of the fungus on maize. The polypeptide is Transcription factor TOXE (Cochliobolus carbonum (Maize leaf spot fungus)).